The following is a 127-amino-acid chain: uncharacterized protein (127 aa).

In terms of domain architecture, VOC spans 1 to 127 (MKIVVTSIFV…CGNLIQIVQK (127 aa)).

It belongs to the glyoxalase I family.

This is an uncharacterized protein from Bacillus subtilis (strain 168).